Here is a 668-residue protein sequence, read N- to C-terminus: tRNA 5-methylaminomethyl-2-thiouridine biosynthesis bifunctional protein MnmC (668 aa).

The interval 1–245 is tRNA (mnm(5)s(2)U34)-methyltransferase; sequence MKHYSIQPAN…KREMLCGVME (245 aa). Residues 270 to 668 are FAD-dependent cmnm(5)s(2)U34 oxidoreductase; the sequence is IGGGIASALL…LLKGKAVKAG (399 aa).

It in the N-terminal section; belongs to the methyltransferase superfamily. tRNA (mnm(5)s(2)U34)-methyltransferase family. The protein in the C-terminal section; belongs to the DAO family. Requires FAD as cofactor.

The protein localises to the cytoplasm. It carries out the reaction 5-aminomethyl-2-thiouridine(34) in tRNA + S-adenosyl-L-methionine = 5-methylaminomethyl-2-thiouridine(34) in tRNA + S-adenosyl-L-homocysteine + H(+). Its function is as follows. Catalyzes the last two steps in the biosynthesis of 5-methylaminomethyl-2-thiouridine (mnm(5)s(2)U) at the wobble position (U34) in tRNA. Catalyzes the FAD-dependent demodification of cmnm(5)s(2)U34 to nm(5)s(2)U34, followed by the transfer of a methyl group from S-adenosyl-L-methionine to nm(5)s(2)U34, to form mnm(5)s(2)U34. The polypeptide is tRNA 5-methylaminomethyl-2-thiouridine biosynthesis bifunctional protein MnmC (Escherichia coli O9:H4 (strain HS)).